The primary structure comprises 282 residues: Nucleotide-binding protein ABO_0549 (282 aa).

Residue 8 to 15 coordinates ATP; that stretch reads GRSGSGKT. A GTP-binding site is contributed by 59 to 62; that stretch reads DARN.

Belongs to the RapZ-like family.

Its function is as follows. Displays ATPase and GTPase activities. This chain is Nucleotide-binding protein ABO_0549, found in Alcanivorax borkumensis (strain ATCC 700651 / DSM 11573 / NCIMB 13689 / SK2).